A 573-amino-acid chain; its full sequence is 2-succinyl-5-enolpyruvyl-6-hydroxy-3-cyclohexene-1-carboxylate synthase (573 aa).

Belongs to the TPP enzyme family. MenD subfamily. As to quaternary structure, homodimer. The cofactor is Mg(2+). Mn(2+) serves as cofactor. Requires thiamine diphosphate as cofactor.

The enzyme catalyses isochorismate + 2-oxoglutarate + H(+) = 5-enolpyruvoyl-6-hydroxy-2-succinyl-cyclohex-3-ene-1-carboxylate + CO2. It functions in the pathway quinol/quinone metabolism; 1,4-dihydroxy-2-naphthoate biosynthesis; 1,4-dihydroxy-2-naphthoate from chorismate: step 2/7. It participates in quinol/quinone metabolism; menaquinone biosynthesis. Its function is as follows. Catalyzes the thiamine diphosphate-dependent decarboxylation of 2-oxoglutarate and the subsequent addition of the resulting succinic semialdehyde-thiamine pyrophosphate anion to isochorismate to yield 2-succinyl-5-enolpyruvyl-6-hydroxy-3-cyclohexene-1-carboxylate (SEPHCHC). This is 2-succinyl-5-enolpyruvyl-6-hydroxy-3-cyclohexene-1-carboxylate synthase from Shewanella sp. (strain W3-18-1).